A 212-amino-acid chain; its full sequence is Ribonuclease HII (212 aa).

Positions 24–212 (QLVAGVDEVG…PVKKALGIEE (189 aa)) constitute an RNase H type-2 domain. Asp-30, Glu-31, and Asp-122 together coordinate a divalent metal cation.

This sequence belongs to the RNase HII family. Requires Mn(2+) as cofactor. Mg(2+) serves as cofactor.

The protein resides in the cytoplasm. The catalysed reaction is Endonucleolytic cleavage to 5'-phosphomonoester.. Endonuclease that specifically degrades the RNA of RNA-DNA hybrids. In Vibrio campbellii (strain ATCC BAA-1116), this protein is Ribonuclease HII.